Consider the following 208-residue polypeptide: Urease accessory protein UreE (208 aa).

Residues 145-195 are disordered; that stretch reads AEAHGHGQAHAHDHHDHDHHDHGHDHAHHDHAHHDHAHDHHGHDHAHDHAH.

Belongs to the UreE family.

It localises to the cytoplasm. Its function is as follows. Involved in urease metallocenter assembly. Binds nickel. Probably functions as a nickel donor during metallocenter assembly. This Azorhizobium caulinodans (strain ATCC 43989 / DSM 5975 / JCM 20966 / LMG 6465 / NBRC 14845 / NCIMB 13405 / ORS 571) protein is Urease accessory protein UreE.